Reading from the N-terminus, the 123-residue chain is MRLHLLVLSVIVVSLLVSDNAHANSHDDSKTRALRETPINGLVTNQLAVSRNLTPAKFITNSEERHSSEKKSRRLQIYFHSPYYGIHPVDYHYVGSYESGVTTICSIVLFVMVFGCLYKIFSQ.

An N-terminal signal peptide occupies residues 1–23; it reads MRLHLLVLSVIVVSLLVSDNAHA. Positions 32 to 65 match the RxLR-dEER motif; sequence RALRETPINGLVTNQLAVSRNLTPAKFITNSEER. The helical transmembrane segment at 101–121 threads the bilayer; it reads VTTICSIVLFVMVFGCLYKIF.

Belongs to the RxLR effector family.

Its subcellular location is the secreted. The protein localises to the host endoplasmic reticulum membrane. In terms of biological role, secreted effector that does not suppress pattern-triggered immunity (PTI) in plant host. The chain is Secreted RxLR effector protein RXLR-C21 from Plasmopara halstedii (Downy mildew of sunflower).